A 247-amino-acid polypeptide reads, in one-letter code: ATP synthase subunit a, chloroplastic (247 aa).

The next 5 helical transmembrane spans lie at Gln38 to Val58, Val95 to Leu115, Ile134 to Thr154, Leu199 to Leu219, and Gly220 to Gly240.

This sequence belongs to the ATPase A chain family. In terms of assembly, F-type ATPases have 2 components, CF(1) - the catalytic core - and CF(0) - the membrane proton channel. CF(1) has five subunits: alpha(3), beta(3), gamma(1), delta(1), epsilon(1). CF(0) has four main subunits: a, b, b' and c.

Its subcellular location is the plastid. The protein localises to the chloroplast thylakoid membrane. Its function is as follows. Key component of the proton channel; it plays a direct role in the translocation of protons across the membrane. The chain is ATP synthase subunit a, chloroplastic from Calycanthus floridus var. glaucus (Eastern sweetshrub).